The primary structure comprises 232 residues: tRNA (guanine-N(1)-)-methyltransferase (232 aa).

S-adenosyl-L-methionine contacts are provided by residues G111 and 131-136 (IGDYIL).

This sequence belongs to the RNA methyltransferase TrmD family. As to quaternary structure, homodimer.

It localises to the cytoplasm. It carries out the reaction guanosine(37) in tRNA + S-adenosyl-L-methionine = N(1)-methylguanosine(37) in tRNA + S-adenosyl-L-homocysteine + H(+). In terms of biological role, specifically methylates guanosine-37 in various tRNAs. The polypeptide is tRNA (guanine-N(1)-)-methyltransferase (Bartonella henselae (strain ATCC 49882 / DSM 28221 / CCUG 30454 / Houston 1) (Rochalimaea henselae)).